The sequence spans 177 residues: Large ribosomal subunit protein uL6 (177 aa).

The protein belongs to the universal ribosomal protein uL6 family. As to quaternary structure, part of the 50S ribosomal subunit.

This protein binds to the 23S rRNA, and is important in its secondary structure. It is located near the subunit interface in the base of the L7/L12 stalk, and near the tRNA binding site of the peptidyltransferase center. This is Large ribosomal subunit protein uL6 from Rhizobium johnstonii (strain DSM 114642 / LMG 32736 / 3841) (Rhizobium leguminosarum bv. viciae).